An 86-amino-acid chain; its full sequence is ATP synthase subunit c (86 aa).

2 helical membrane passes run 13–33 (FFAT…AGLA) and 63–83 (ILGQ…AFIL).

The protein belongs to the ATPase C chain family. As to quaternary structure, F-type ATPases have 2 components, F(1) - the catalytic core - and F(0) - the membrane proton channel. F(1) has five subunits: alpha(3), beta(3), gamma(1), delta(1), epsilon(1). F(0) has three main subunits: a(1), b(2) and c(10-14). The alpha and beta chains form an alternating ring which encloses part of the gamma chain. F(1) is attached to F(0) by a central stalk formed by the gamma and epsilon chains, while a peripheral stalk is formed by the delta and b chains.

It is found in the cell membrane. Functionally, f(1)F(0) ATP synthase produces ATP from ADP in the presence of a proton or sodium gradient. F-type ATPases consist of two structural domains, F(1) containing the extramembraneous catalytic core and F(0) containing the membrane proton channel, linked together by a central stalk and a peripheral stalk. During catalysis, ATP synthesis in the catalytic domain of F(1) is coupled via a rotary mechanism of the central stalk subunits to proton translocation. Its function is as follows. Key component of the F(0) channel; it plays a direct role in translocation across the membrane. A homomeric c-ring of between 10-14 subunits forms the central stalk rotor element with the F(1) delta and epsilon subunits. The polypeptide is ATP synthase subunit c (Acholeplasma laidlawii (strain PG-8A)).